The following is a 768-amino-acid chain: Putative calcium up-regulated protein H (768 aa).

Positions 1–22 (MINIEDISKSSNQSEEKQLKST) are disordered. Ricin B-type lectin domains follow at residues 25–145 (KPKY…WTTF) and 116–248 (QGNG…WGIN).

The protein belongs to the cup family.

It is found in the cytoplasm. It localises to the membrane. In terms of biological role, may play an important role in stabilizing and/or regulating the cell membrane during Ca(2+) stress or certain stages of development. This Dictyostelium discoideum (Social amoeba) protein is Putative calcium up-regulated protein H (cupH).